We begin with the raw amino-acid sequence, 158 residues long: Na(+)/H(+) antiporter subunit E (158 aa).

2 helical membrane-spanning segments follow: residues 21-41 (SPSAAGFITGYILGMLSLFFF) and 51-71 (LWKLISIIKLCFIFIKELYLA).

This sequence belongs to the CPA3 antiporters (TC 2.A.63) subunit E family. In terms of assembly, forms a heterooligomeric complex that consists of seven subunits: MrpA, MrpB, MrpC, MrpD, MrpE, MrpF and MrpG.

It is found in the cell membrane. In terms of biological role, mrp complex is a Na(+)/H(+) antiporter that is considered to be the major Na(+) excretion system in B.subtilis. Has a major role in Na(+) resistance and a minor role in Na(+)- and K(+)-dependent pH homeostasis as compared to TetB. MrpA may be the actual Na(+)/H(+) antiporter, although the six other Mrp proteins are all required for Na(+)/H(+) antiport activity and Na(+) resistance. MrpA is required for initiation of sporulation when external Na(+) concentration increases. Also transports Li(+) but not K(+), Ca(2+) or Mg(2+). The chain is Na(+)/H(+) antiporter subunit E (mrpE) from Bacillus subtilis (strain 168).